The sequence spans 84 residues: Large ribosomal subunit protein bL27 (84 aa).

Belongs to the bacterial ribosomal protein bL27 family.

The sequence is that of Large ribosomal subunit protein bL27 from Campylobacter lari (strain RM2100 / D67 / ATCC BAA-1060).